A 203-amino-acid chain; its full sequence is MGCVCSKQLEGRRQEDISLLASQTFFSEAEVEVLHGLFIKLTSCLSNDNLLTKEKFQFILIKNTKKRSLSAERIFGLFDMRNDGAIDFGEFVHTLNIFHPNSSPRDKAIFAFRLYDTRETGFIEPEEVKEMIIDVLEESELMLSESIIDSIVSKTFEEADWKKDGIIDLEEWENFVATYPLTLKNMTIPFLKDIPRIFPTFLR.

A lipid anchor (N-myristoyl glycine) is attached at Gly-2. 4 EF-hand domains span residues 30–65 (EVEV…KNTK), 66–101 (KRSL…FHPN), 103–138 (SPRD…VLEE), and 147–182 (IIDS…YPLT).

Belongs to the calcineurin regulatory subunit family. As to quaternary structure, homodimer. Interacts with PP2CA, CIPK2, CIPK11, CIPK23 and CIPK24. In terms of processing, both N-myristoylation and calcium-mediated conformational changes are essential for its function. Expressed in green tissues, but not in the roots.

Its subcellular location is the cytoplasm. It localises to the nucleus. Acts as a calcium sensor. CBL proteins interact with CIPK serine-threonine protein kinases. Binding of a CBL protein to the regulatory NAF domain of a CIPK protein lead to the activation of the kinase in a calcium-dependent manner. May function as a positive regulator of salt or drought responses. The polypeptide is Calcineurin B-like protein 5 (CBL5) (Arabidopsis thaliana (Mouse-ear cress)).